Here is an 89-residue protein sequence, read N- to C-terminus: Small ribosomal subunit protein uS15 (89 aa).

Belongs to the universal ribosomal protein uS15 family. In terms of assembly, part of the 30S ribosomal subunit. Forms a bridge to the 50S subunit in the 70S ribosome, contacting the 23S rRNA.

One of the primary rRNA binding proteins, it binds directly to 16S rRNA where it helps nucleate assembly of the platform of the 30S subunit by binding and bridging several RNA helices of the 16S rRNA. In terms of biological role, forms an intersubunit bridge (bridge B4) with the 23S rRNA of the 50S subunit in the ribosome. In Hahella chejuensis (strain KCTC 2396), this protein is Small ribosomal subunit protein uS15.